The chain runs to 359 residues: 3-dehydroquinate synthase (359 aa).

NAD(+)-binding positions include 106 to 110, 130 to 131, Lys-143, Lys-152, and 170 to 173; these read GVVGD, TT, and TLQT. Residues Glu-185, His-248, and His-265 each contribute to the Zn(2+) site.

Belongs to the sugar phosphate cyclases superfamily. Dehydroquinate synthase family. Requires Co(2+) as cofactor. The cofactor is Zn(2+). NAD(+) serves as cofactor.

It is found in the cytoplasm. The enzyme catalyses 7-phospho-2-dehydro-3-deoxy-D-arabino-heptonate = 3-dehydroquinate + phosphate. It participates in metabolic intermediate biosynthesis; chorismate biosynthesis; chorismate from D-erythrose 4-phosphate and phosphoenolpyruvate: step 2/7. In terms of biological role, catalyzes the conversion of 3-deoxy-D-arabino-heptulosonate 7-phosphate (DAHP) to dehydroquinate (DHQ). This chain is 3-dehydroquinate synthase, found in Desulforamulus reducens (strain ATCC BAA-1160 / DSM 100696 / MI-1) (Desulfotomaculum reducens).